Consider the following 631-residue polypeptide: MBT domain-containing protein 1 (631 aa).

Residues M1–N31 are disordered. Residues P45–R80 form an FCS-type zinc finger. Zn(2+) is bound by residues C54, C57, C74, and C78. An N6-acetyllysine modification is found at K115. MBT repeat units lie at residues F144–P248, T256–R353, F354–P459, and F467–P563. The interval P563–P631 is disordered. Over residues A564 to S576 the composition is skewed to low complexity. Positions K577–M593 are enriched in basic residues.

As to quaternary structure, monomer. Component of the NuA4 histone acetyltransferase complex. Interacts with EPC1; interaction is direct and promotes recruitment of MBTD1 into the NuA4 histone acetyltransferase complex.

It localises to the nucleus. The protein resides in the chromosome. In terms of biological role, chromatin reader component of the NuA4 histone acetyltransferase complex, a multiprotein complex involved in transcriptional activation of select genes principally by acetylation of nucleosomal histones H4 and H2A. The NuA4 complex plays a direct role in repair of DNA double-strand breaks (DSBs) by promoting homologous recombination (HR). MBTD1 specifically recognizes and binds monomethylated and dimethylated 'Lys-20' on histone H4 (H4K20me1 and H4K20me2, respectively). In the NuA4 complex, MBTD1 promotes recruitment of the complex to H4K20me marks by competing with TP53BP1 for binding to H4K20me. Following recruitment to H4K20me at DNA breaks, the NuA4 complex catalyzes acetylation of 'Lys-15' on histone H2A (H2AK15), blocking the ubiquitination mark required for TP53BP1 localization at DNA breaks, thereby promoting homologous recombination (HR). This Mus musculus (Mouse) protein is MBT domain-containing protein 1.